The following is a 110-amino-acid chain: Iron-sulfur cluster assembly protein CyaY (110 aa).

It belongs to the frataxin family.

Its function is as follows. Involved in iron-sulfur (Fe-S) cluster assembly. May act as a regulator of Fe-S biogenesis. This chain is Iron-sulfur cluster assembly protein CyaY, found in Pseudomonas fluorescens (strain ATCC BAA-477 / NRRL B-23932 / Pf-5).